We begin with the raw amino-acid sequence, 394 residues long: Proliferation-associated protein 2G4 (394 aa).

The residue at position 2 (serine 2) is an N-acetylserine. Serine 2 is modified (phosphoserine). The segment at 2–48 (SGEDEQQEQTIAEDLVVTKYKMGGDIANRVLRSLVEASSSGVSVLSL) is necessary for nucleolar localization. An RNA-binding region spans residues 46–54 (LSLCEKGDA). Lysine 298 participates in a covalent cross-link: Glycyl lysine isopeptide (Lys-Gly) (interchain with G-Cter in SUMO2). Residues 301 to 394 (LLQPFNVLYE…ETLEENGAGD (94 aa)) form a necessary for nucleolar localization region. Position 335 is a phosphoserine (serine 335). The disordered stretch occupies residues 358-394 (LQSSASRKTQKKKKKKASKTVENATSGETLEENGAGD). Serine 361 carries the post-translational modification Phosphoserine; by PKC/PRKCD. The interaction with RNA stretch occupies residues 361–375 (SASRKTQKKKKKKAS). The span at 365-375 (KTQKKKKKKAS) shows a compositional bias: basic residues. A phosphothreonine mark is found at threonine 366 and threonine 386.

This sequence belongs to the peptidase M24 family. In terms of assembly, isoform 2 interacts with the cytoplasmic domain of non-phosphorylated ERBB3; the interaction requires PKC activity. Interacts with AR. Treatment with HRG leads to dissociation from ERBB3 and increases association with AR. Interacts with nucleolin/NCL. Component of a ribonucleoprotein complex containing at least PA2G4, NCL, TOP1, PABPC2, RPLP0, acetylated histone H1 (HIST1H1A or H1F1), histone H1 2/4, RPL4, RPL8, RPL15, RPL18, RPL18A, RPL21, RPL11, RPL12, RPL28, RPL27, RPLP2 and RPL24. Interacts with HDAC2. Interacts with RB1; the interaction is enhanced upon PA2G4 dephosphorylation. Interacts with AKT1. Isoform 1 and isoform 2 interact with RNF20. Isoform 2 interacts with HUWE1. Interacts with DNAJC21. Post-translationally, phosphorylated on serine and threonine residues. Phosphorylation is enhanced by HRG treatment. Basal phosphorylation is PKC-dependent and HRG-induced phosphorylation is predominantly PKC-independent. Phosphorylation at Ser-361 by PKC/PRKCD regulates its nucleolar localization. In terms of processing, isoform 2 is polyubiquitinated, leading to proteasomal degradation and phosphorylation by PKC/PRKCD enhances polyubiquitination. In terms of tissue distribution, widely expressed.

Its subcellular location is the cytoplasm. It localises to the nucleus. The protein resides in the nucleolus. Functionally, may play a role in a ERBB3-regulated signal transduction pathway. Seems be involved in growth regulation. Acts a corepressor of the androgen receptor (AR) and is regulated by the ERBB3 ligand neuregulin-1/heregulin (HRG). Inhibits transcription of some E2F1-regulated promoters, probably by recruiting histone acetylase (HAT) activity. Binds RNA. Associates with 28S, 18S and 5.8S mature rRNAs, several rRNA precursors and probably U3 small nucleolar RNA. May be involved in regulation of intermediate and late steps of rRNA processing. May be involved in ribosome assembly. Mediates cap-independent translation of specific viral IRESs (internal ribosomal entry site). Together with PTBP1 is required for the translation initiation on the foot-and-mouth disease virus (FMDV) IRES. Regulates cell proliferation, differentiation, and survival. Isoform 1 suppresses apoptosis whereas isoform 2 promotes cell differentiation. The polypeptide is Proliferation-associated protein 2G4 (Pa2g4) (Mus musculus (Mouse)).